The primary structure comprises 270 residues: Karrikin insensitive 2 receptor CA (270 aa).

Serine 95 acts as the Nucleophile in catalysis. Residues aspartate 217 and histidine 246 contribute to the active site.

The protein belongs to the AB hydrolase superfamily. As to expression, expressed in stigma.

It is found in the nucleus. The protein localises to the cytoplasm. Hydrolase which may be involved in plant olfaction during volatile communication. The polypeptide is Karrikin insensitive 2 receptor CA (Petunia hybrida (Petunia)).